The primary structure comprises 225 residues: LHFPL tetraspan subfamily member 2a protein (225 aa).

Transmembrane regions (helical) follow at residues 11–31, 99–119, 129–149, and 178–198; these read MLWTLLSIVAAFSELIAFLST, IFLAAGILLLCAVAFISIFTM, IFNVCGLLQAIAGLFLIVGLV, and AGWAFYTALAGTVLCFLCAVF.

It belongs to the LHFP family.

The protein resides in the membrane. Plays a role in fertility. Involved in distal reproductive tract development. This is LHFPL tetraspan subfamily member 2a protein from Danio rerio (Zebrafish).